The primary structure comprises 167 residues: Lipoprotein signal peptidase (167 aa).

4 helical membrane passes run 5–25, 42–62, 70–90, and 102–122; these read ICST…LDLG, LIPY…SFLA, WFFA…MYRA, and ALII…GFVI. Catalysis depends on residues Asp123 and Asp141. The helical transmembrane segment at 137–157 threads the bilayer; that stretch reads FNIADMAICIGAGLVIIDSFL.

This sequence belongs to the peptidase A8 family.

The protein resides in the cell inner membrane. The catalysed reaction is Release of signal peptides from bacterial membrane prolipoproteins. Hydrolyzes -Xaa-Yaa-Zaa-|-(S,diacylglyceryl)Cys-, in which Xaa is hydrophobic (preferably Leu), and Yaa (Ala or Ser) and Zaa (Gly or Ala) have small, neutral side chains.. Its pathway is protein modification; lipoprotein biosynthesis (signal peptide cleavage). This protein specifically catalyzes the removal of signal peptides from prolipoproteins. The chain is Lipoprotein signal peptidase from Photorhabdus laumondii subsp. laumondii (strain DSM 15139 / CIP 105565 / TT01) (Photorhabdus luminescens subsp. laumondii).